The primary structure comprises 501 residues: Na(+)/H(+) antiporter NhaB (501 aa).

11 consecutive transmembrane segments (helical) span residues 24-44 (VILLFLVINPIVMYLLGPGVA), 46-66 (WLLIGEFIFTLAMALKCYPLL), 90-110 (VLTNFPVILLLMFMVAGIYFM), 145-165 (FLDALTVTAVIISVAVGFFSV), 206-226 (LLMHGAIGTALGGVATMVGEP), 239-259 (FAGFFLHMAPVSIPVLFAGLA), 302-319 (ALWIQAVAAVILVFGLAF), 351-371 (FQESLPFTSLLVVFFAVVAVI), 395-415 (MFFIANGLLSMISDNVFVATV), 450-470 (VATPNGQAAFLFLLTSAIAPL), and 478-498 (MVIMALPYTIVMGGVGLYMVT).

This sequence belongs to the NhaB Na(+)/H(+) (TC 2.A.34) antiporter family.

It is found in the cell inner membrane. It carries out the reaction 2 Na(+)(in) + 3 H(+)(out) = 2 Na(+)(out) + 3 H(+)(in). Its function is as follows. Na(+)/H(+) antiporter that extrudes sodium in exchange for external protons. This chain is Na(+)/H(+) antiporter NhaB, found in Marinobacter nauticus (strain ATCC 700491 / DSM 11845 / VT8) (Marinobacter aquaeolei).